The chain runs to 69 residues: Putative membrane protein insertion efficiency factor (69 aa).

This sequence belongs to the UPF0161 family.

It localises to the cell membrane. Could be involved in insertion of integral membrane proteins into the membrane. This chain is Putative membrane protein insertion efficiency factor, found in Clostridium botulinum (strain Kyoto / Type A2).